Reading from the N-terminus, the 73-residue chain is Kappa-scoloptoxin(03)-Ssm1b (73 aa).

An N-terminal signal peptide occupies residues 1-23 (MKPSMAILLVIALIIFSLDKSYS). Disulfide bonds link C32–C58, C41–C57, and C44–C67.

In terms of processing, contains 3 disulfide bonds. In terms of tissue distribution, expressed by the venom gland.

It localises to the secreted. Functionally, inhibits voltage-gated potassium channels. This chain is Kappa-scoloptoxin(03)-Ssm1b, found in Scolopendra mutilans (Chinese red-headed centipede).